Here is an 81-residue protein sequence, read N- to C-terminus: Dermaseptin-B2 (81 aa).

The first 22 residues, 1-22, serve as a signal peptide directing secretion; it reads MAFLKKSLFLVLFLGLVSLSIC. Positions 23 to 43 are excised as a propeptide; the sequence is EEEKRENEDEEEQEDDEQSEM. Positions 24–46 are disordered; sequence EEKRENEDEEEQEDDEQSEMKRG. The span at 30 to 40 shows a compositional bias: acidic residues; sequence EDEEEQEDDEQ. Residues 54–55 are hinge region that separates the two alpha-helices that constitute the peptide; the sequence is VG. Val-78 carries the post-translational modification Valine amide. Residues 80 to 81 constitute a propeptide that is removed on maturation; it reads EQ.

Amidation permits an increased antimicrobial activity against some microorganisms such as T.album and S.cerevisiae. In terms of processing, may contain a D-amino acid residue, since the natural peptide is not identical in chromatographic properties to the synthetic peptide. Expressed by the skin glands.

The protein localises to the secreted. It is found in the target cell membrane. Cationic amphipathic alpha-helical antimicrobial peptide with potent activity against Gram-negative and Gram-positive bacteria, fungi and protozoa. Acts in a synergistic effect in combination with Plasticin-B1 at doses that are not active alone. Acts by disturbing membrane functions. On model membranes, induces a strong perturbation of anionic lipid bilayers, resides at the hydrocarbon core-water interface, parallel to the plane of the membrane, and interacts preferentially with the polar head groups and glycerol backbone region of the anionic phospholipids, as well as the region of the lipid acyl chain near the bilayer surface. Induces a positive curvature of the bilayer and clustering of anionic lipids, consistent with a carpet mechanism, that may lead to the formation of mixed peptide-phospholipid toroidal, transient pores and membrane permeation/disruption once a threshold peptide accumulation is reached. Also enhances binding of agonists to adenosine A1 receptors (ADORA1), adenosine A2a receptors (ADORA2A), alpha-2 adrenergic receptors (ADRA2A) and 5-hydroxytryptamine 1A receptors (HTR1A). In addition, it enhances guanyl nucleotide exchange which may result in the conversion of receptors to a high affinity state complexed with guanyl nucleotide free G-protein. Affects human behavior eliciting profound malaise, followed by listlessness and then euphoria. Does not show cytotoxic activity on CHO cells. Does not act as a chemoattractant. Does not show hemolytic activity. This Phyllomedusa bicolor (Two-colored leaf frog) protein is Dermaseptin-B2 (ADR).